A 351-amino-acid chain; its full sequence is Transmembrane protein 115 (351 aa).

At 1-19 the chain is on the cytoplasmic side; the sequence is MQRALPGARQHLGAILSSA. Positions 1–205 are mediates homooligomerization; that stretch reads MQRALPGARQ…FGLISSWVYL (205 aa). Residues 20–40 form a helical membrane-spanning segment; it reads SVVVKALCAAVLFLYLLSFAV. Residues 41–97 lie on the Lumenal side of the membrane; it reads DTGCLAVTPGYLFPPNFWIWTLATHGLMEQHVWDVAISLATVVVAGRLLEPLWGALE. Residues 98 to 118 form a helical membrane-spanning segment; sequence LLIFFSVVNVSVGLLGAFAYL. Topologically, residues 119–126 are cytoplasmic; that stretch reads LTYMASFN. A helical membrane pass occupies residues 127-147; sequence LVYLFTVRIHGALGFLGGVLV. At 148-165 the chain is on the lumenal side; that stretch reads ALKQTMGDCVVLRVPQVR. The helical transmembrane segment at 166 to 186 threads the bilayer; it reads VSVVPMLLLGLLLLLRLATLL. The Cytoplasmic portion of the chain corresponds to 187–351; that stretch reads QSPALASYGF…ITFEAAPPTL (165 aa). The mediates localization to the Golgi stretch occupies residues 206–229; the sequence is RFYQRHSRGRGDMADHFAFATFFP. The interval 300-351 is disordered; that stretch reads DQSVWPSMDDDEEEAGAKVDSPMPSDKAPTLPGKGAVPESSLITFEAAPPTL. Position 329 is a phosphothreonine (T329).

The protein belongs to the TMEM115 family. Homooligomer. Interacts with COPB1. May interact with LMAN1. Interacts with the COG complex; probably through COG3.

The protein resides in the golgi apparatus. It localises to the golgi stack membrane. May play a role in retrograde transport of proteins from the Golgi to the endoplasmic reticulum. May indirectly play a role in protein glycosylation in the Golgi. The polypeptide is Transmembrane protein 115 (Bos taurus (Bovine)).